Reading from the N-terminus, the 439-residue chain is Tubulin beta chain (439 aa).

GTP-binding residues include Q11, E69, S138, G142, T143, G144, N204, and N226. E69 serves as a coordination point for Mg(2+).

It belongs to the tubulin family. Dimer of alpha and beta chains. A typical microtubule is a hollow water-filled tube with an outer diameter of 25 nm and an inner diameter of 15 nM. Alpha-beta heterodimers associate head-to-tail to form protofilaments running lengthwise along the microtubule wall with the beta-tubulin subunit facing the microtubule plus end conferring a structural polarity. Microtubules usually have 13 protofilaments but different protofilament numbers can be found in some organisms and specialized cells. Requires Mg(2+) as cofactor.

The protein resides in the cytoplasm. It is found in the cytoskeleton. Its function is as follows. Tubulin is the major constituent of microtubules, a cylinder consisting of laterally associated linear protofilaments composed of alpha- and beta-tubulin heterodimers. Microtubules grow by the addition of GTP-tubulin dimers to the microtubule end, where a stabilizing cap forms. Below the cap, tubulin dimers are in GDP-bound state, owing to GTPase activity of alpha-tubulin. The polypeptide is Tubulin beta chain (TUB2) (Encephalitozoon intestinalis (Microsporidian parasite)).